Reading from the N-terminus, the 258-residue chain is Phosphate import ATP-binding protein PstB (258 aa).

The region spanning Ile-12–Ile-253 is the ABC transporter domain. An ATP-binding site is contributed by Gly-44–Ser-51.

This sequence belongs to the ABC transporter superfamily. Phosphate importer (TC 3.A.1.7) family. The complex is composed of two ATP-binding proteins (PstB), two transmembrane proteins (PstC and PstA) and a solute-binding protein (PstS).

Its subcellular location is the cell inner membrane. The enzyme catalyses phosphate(out) + ATP + H2O = ADP + 2 phosphate(in) + H(+). Its function is as follows. Part of the ABC transporter complex PstSACB involved in phosphate import. Responsible for energy coupling to the transport system. The protein is Phosphate import ATP-binding protein PstB of Bordetella avium (strain 197N).